Here is a 385-residue protein sequence, read N- to C-terminus: T-box transcription factor TBX10 (385 aa).

The interval 22–61 is disordered; sequence TTSSGWEPRLGSPFPSGPCTSSTGAQAVAEPTGQGPKNPR. Residues 69–252 constitute a DNA-binding region (T-box); it reads LEMKPLWEEF…SNPFAKGFRE (184 aa).

Its subcellular location is the nucleus. In terms of biological role, probable transcriptional regulator involved in developmental processes. The chain is T-box transcription factor TBX10 (TBX10) from Homo sapiens (Human).